We begin with the raw amino-acid sequence, 458 residues long: Serine--tRNA ligase (458 aa).

252 to 254 (TAE) serves as a coordination point for L-serine. ATP is bound by residues 283-285 (RKE) and Val299. Glu306 contributes to the L-serine binding site. An ATP-binding site is contributed by 370–373 (EMVS). L-serine is bound at residue Thr405.

This sequence belongs to the class-II aminoacyl-tRNA synthetase family. Type-1 seryl-tRNA synthetase subfamily. As to quaternary structure, homodimer. The tRNA molecule binds across the dimer.

It localises to the cytoplasm. The catalysed reaction is tRNA(Ser) + L-serine + ATP = L-seryl-tRNA(Ser) + AMP + diphosphate + H(+). It carries out the reaction tRNA(Sec) + L-serine + ATP = L-seryl-tRNA(Sec) + AMP + diphosphate + H(+). The protein operates within aminoacyl-tRNA biosynthesis; selenocysteinyl-tRNA(Sec) biosynthesis; L-seryl-tRNA(Sec) from L-serine and tRNA(Sec): step 1/1. Catalyzes the attachment of serine to tRNA(Ser). Is also able to aminoacylate tRNA(Sec) with serine, to form the misacylated tRNA L-seryl-tRNA(Sec), which will be further converted into selenocysteinyl-tRNA(Sec). This Sulfolobus acidocaldarius (strain ATCC 33909 / DSM 639 / JCM 8929 / NBRC 15157 / NCIMB 11770) protein is Serine--tRNA ligase.